Consider the following 464-residue polypeptide: Asparagine--tRNA ligase (464 aa).

Belongs to the class-II aminoacyl-tRNA synthetase family. As to quaternary structure, homodimer.

The protein localises to the cytoplasm. The enzyme catalyses tRNA(Asn) + L-asparagine + ATP = L-asparaginyl-tRNA(Asn) + AMP + diphosphate + H(+). In Clostridium beijerinckii (strain ATCC 51743 / NCIMB 8052) (Clostridium acetobutylicum), this protein is Asparagine--tRNA ligase.